Here is a 286-residue protein sequence, read N- to C-terminus: UDP-3-O-acyl-N-acetylglucosamine deacetylase (286 aa).

The Zn(2+) site is built by H79, H237, and D241. H264 acts as the Proton donor in catalysis.

This sequence belongs to the LpxC family. Requires Zn(2+) as cofactor.

The catalysed reaction is a UDP-3-O-[(3R)-3-hydroxyacyl]-N-acetyl-alpha-D-glucosamine + H2O = a UDP-3-O-[(3R)-3-hydroxyacyl]-alpha-D-glucosamine + acetate. Its pathway is glycolipid biosynthesis; lipid IV(A) biosynthesis; lipid IV(A) from (3R)-3-hydroxytetradecanoyl-[acyl-carrier-protein] and UDP-N-acetyl-alpha-D-glucosamine: step 2/6. Functionally, catalyzes the hydrolysis of UDP-3-O-myristoyl-N-acetylglucosamine to form UDP-3-O-myristoylglucosamine and acetate, the committed step in lipid A biosynthesis. The polypeptide is UDP-3-O-acyl-N-acetylglucosamine deacetylase (Brucella melitensis biotype 2 (strain ATCC 23457)).